Consider the following 93-residue polypeptide: MSETQNTQVAKRQRTLVGKVVSNKMDKTVVVLVERRVKHPIFGKIIMRSAKYKAHDESNQYNEGDTVEIAEGRPISRSKAWRVVRLVEAARVI.

This sequence belongs to the universal ribosomal protein uS17 family. In terms of assembly, part of the 30S ribosomal subunit.

Functionally, one of the primary rRNA binding proteins, it binds specifically to the 5'-end of 16S ribosomal RNA. The protein is Small ribosomal subunit protein uS17 of Bordetella bronchiseptica (strain ATCC BAA-588 / NCTC 13252 / RB50) (Alcaligenes bronchisepticus).